Here is a 720-residue protein sequence, read N- to C-terminus: Cyclopenase penL (720 aa).

3 residues coordinate Cu cation: His-137, His-141, and His-313.

It belongs to the tyrosinase family. Requires Cu(2+) as cofactor.

The enzyme catalyses (-)-cyclopenine = viridicatin + methyl isocyanate + H(+). The catalysed reaction is (-)-4'-methoxycyclopenine = 4'-methoxyviridicatin + methyl isocyanate + H(+). The protein operates within secondary metabolite biosynthesis. It functions in the pathway alkaloid biosynthesis. Its pathway is mycotoxin biosynthesis. In terms of biological role, cyclopenase; part of the gene cluster that mediates the biosynthesis of penigequinolones, potent insecticidal alkaloids that contain a highly modified 10-carbon prenyl group. The first stage is catalyzed by the nonribosomal peptide synthetase penN that condenses anthranilic acid and O-methyl-L-tyrosine to produce 4'-methoxycyclopeptin. 4'-methoxycyclopeptin is then converted to 4'-methoxydehydrocyclopeptin by the ketoglutarate-dependent dioxygenase penM through dehydrogenation to form a double bond between C-alpha and C-beta of the O-methyltyrosine side chain. PenM also converts its first product methoxydehydrocyclopeptin to 4'-methoxycyclopenin. The following conversion of 4'methoxycyclopenin into 4'-methoxyviridicatin is catalyzed by the cyclopenase penL. 4'-methoxyviridicatin is the precursor of quinolone natural products, and is further converted to quinolinone B. The prenyltransferase penI then catalyzes the canonical Friedel-Crafts alkylation of quinolinone B with dimethylallyl cation to yield dimethylallyl quinolone, which is subjected to FAD-dependent dehydrogenation by the FAD-linked oxidoreductase penH to yield conjugated aryl diene. The delta(3') double bond then serves as the site of the second alkylation with DMAPP catalyzed by the prenyltransferase penG to yield a carbenium ion intermediate, which can be attacked by H(2)O to yield a styrenyl quinolone containing a C3'-hydroxyprenyl chain, or undergo cyclization to yield yaequinolones J1 and J2. The conversion of the styrenyl quinolone into the tetrahydrofuran-containing yaequinolone C is performed by the FAD-dependent monooxygenase penE and involves epoxidation of the terminal C7'-C8' olefin, followed by epoxide ring opening initiated by the C3' hydroxyl group. The predicted cysteine hydrolase penJ acts as an epoxide hydrolase that enhances the rate of the 5-exo-tet cyclization step, increasing the yield of yaequinolone C. PenF catalyzes the cationic rearrangement of the epoxide formed by penE (before ring opening to produce yaequinolone C) into yaequinolone D. Finally, the short-chain dehydrogenase/reductase (SDR)-like reductase penD, catalyzes both the dehydration of yaequinolone D and the reduction of the resulting oxonium to yield penigequinolone. This Penicillium thymicola protein is Cyclopenase penL.